Here is a 319-residue protein sequence, read N- to C-terminus: Ribonuclease Z (319 aa).

Histidine 62, histidine 64, aspartate 66, histidine 67, histidine 145, aspartate 215, and histidine 273 together coordinate Zn(2+). Aspartate 66 serves as the catalytic Proton acceptor.

The protein belongs to the RNase Z family. As to quaternary structure, homodimer. Zn(2+) serves as cofactor.

It catalyses the reaction Endonucleolytic cleavage of RNA, removing extra 3' nucleotides from tRNA precursor, generating 3' termini of tRNAs. A 3'-hydroxy group is left at the tRNA terminus and a 5'-phosphoryl group is left at the trailer molecule.. Zinc phosphodiesterase, which displays some tRNA 3'-processing endonuclease activity. Probably involved in tRNA maturation, by removing a 3'-trailer from precursor tRNA. This Borrelia hermsii (strain HS1 / DAH) protein is Ribonuclease Z.